Reading from the N-terminus, the 146-residue chain is Putative nickel-responsive regulator 1 (146 aa).

The Ni(2+) site is built by histidine 81, histidine 92, tyrosine 94, and cysteine 100.

The protein belongs to the transcriptional regulatory CopG/NikR family. The cofactor is Ni(2+).

Its function is as follows. Transcriptional regulator. This chain is Putative nickel-responsive regulator 1, found in Methanosarcina mazei (strain ATCC BAA-159 / DSM 3647 / Goe1 / Go1 / JCM 11833 / OCM 88) (Methanosarcina frisia).